We begin with the raw amino-acid sequence, 315 residues long: 4-diphosphocytidyl-2-C-methyl-D-erythritol kinase (315 aa).

Lysine 26 is an active-site residue. An ATP-binding site is contributed by 111–121 (PLAGGLAGGSA). The active site involves aspartate 153.

Belongs to the GHMP kinase family. IspE subfamily.

The catalysed reaction is 4-CDP-2-C-methyl-D-erythritol + ATP = 4-CDP-2-C-methyl-D-erythritol 2-phosphate + ADP + H(+). It functions in the pathway isoprenoid biosynthesis; isopentenyl diphosphate biosynthesis via DXP pathway; isopentenyl diphosphate from 1-deoxy-D-xylulose 5-phosphate: step 3/6. Its function is as follows. Catalyzes the phosphorylation of the position 2 hydroxy group of 4-diphosphocytidyl-2C-methyl-D-erythritol. The protein is 4-diphosphocytidyl-2-C-methyl-D-erythritol kinase of Salinispora tropica (strain ATCC BAA-916 / DSM 44818 / JCM 13857 / NBRC 105044 / CNB-440).